The chain runs to 1095 residues: MSVSIPSNSVPSSASRFQVHVINEGHGSAAAVGDSADPPHYEETSFGDEAQNRLRISFRPGNQECYDNFLQTGETAKTDTTFHAYDSHTNTYYLQTFGHNTMDAVPKIEYYRNTGSVSGPKVNRPSLLEIHEQLAKNVTVAPGSADRVANGDGMPGDEQAENKEEDMTGVVKFGWVKGVLVRCMLNIWGVMLFIRLSWIVGEAGIGLGVLIILLSTMVTSITGLSTSAIATNGFVRGGGAYYLISRSLGPEFGGSIGLIFAFANAVAVAMYVVGFAETVVDLLKESDSMMVDPTNDIRIIGSITVVILLGISVAGMEWEAKAQVILLVILLIAIANFFIGTVIPSNNEKKSRGFFNYQASIFAENFGPSFTKGEGFFSVFAIFFPAATGILAGANISGDLEDPQDAIPRGTMLAIFITTVAYIGVAICVAACVVRDATGSMNDTIVSGMNCNGSAACGLGYDFSRCQHEPCQYGLMNNFQVMSMVSGFGPLITAGIFSATLSSALASLVSAPKVFQALCKDNIFKGLQFFAKGYGKNNEPLRGYFLTFVIAMAFILIAELNVIAPIISNFFLASYALINFSCFHASYAKSPGWRPAYGIYNMWVSLFGAILCCAVMFVINWWAAVITYVIELFLYIYVTYKKPDVNWGSSTQALSYVSALDNALELTTVEDHVKNFRPQCIVLTGGPMTRPALLDITHAFTKNSGLCICCEVFVGPRKLCVKEMNSGMAKKQAWLIKNKIKAFYAAVAADCFRDGVRSLLQASGLGRMKPNTLVIGYKKNWRKAPLSELENYVGIIHDAFDFEIGVVIVRISQGFDISPVLQVQDELEKLEQERLALEAAIKDNECEEGKGGIRGLFKKAGKLNITKPAPKKDGNISSIQSMHVGEFNQKLVEASAQFKKKQGKGTIDVWWLFDDGGLTLLIPYILTLRKKWKDCKLRIYVGGKITRIEEEKISMASLLSKFRIKFADIHIIGDINIKPNKESWKVFEEMIEPYRLHESHKDLTTAEKLKRESPWKITDAELEAVKEKSYRQVRLNELLQEHSRAANLIVLSLPVARKGSISDLLYMAWLEILTKNLPPVLLVRGNHKNVLTFYS.

Residues 1–173 are Cytoplasmic-facing; that stretch reads MSVSIPSNSV…EEDMTGVVKF (173 aa). An RFXV motif motif is present at residues 16–19; that stretch reads RFQV. The disordered stretch occupies residues 29–49; sequence AAAVGDSADPPHYEETSFGDE. Ser57 and Ser87 each carry phosphoserine. 4 positions are modified to phosphothreonine: Thr91, Thr96, Thr101, and Thr114. Residue Ser116 is modified to Phosphoserine. Residue Ser126 is modified to Phosphoserine; by AMPK. The residue at position 144 (Ser144) is a Phosphoserine. A helical membrane pass occupies residues 174-194; it reads GWVKGVLVRCMLNIWGVMLFI. Residues 195 to 197 are Extracellular-facing; it reads RLS. Residues 198-218 traverse the membrane as a helical segment; the sequence is WIVGEAGIGLGVLIILLSTMV. Residues 219 to 255 lie on the Cytoplasmic side of the membrane; the sequence is TSITGLSTSAIATNGFVRGGGAYYLISRSLGPEFGGS. A helical membrane pass occupies residues 256–276; the sequence is IGLIFAFANAVAVAMYVVGFA. The Extracellular segment spans residues 277 to 298; the sequence is ETVVDLLKESDSMMVDPTNDIR. Residues 299-319 traverse the membrane as a helical segment; the sequence is IIGSITVVILLGISVAGMEWE. Residues 320 to 323 lie on the Cytoplasmic side of the membrane; that stretch reads AKAQ. The chain crosses the membrane as a helical span at residues 324–344; that stretch reads VILLVILLIAIANFFIGTVIP. Over 345–375 the chain is Extracellular; that stretch reads SNNEKKSRGFFNYQASIFAENFGPSFTKGEG. Residues 376 to 396 traverse the membrane as a helical segment; the sequence is FFSVFAIFFPAATGILAGANI. Residues 397-413 lie on the Cytoplasmic side of the membrane; sequence SGDLEDPQDAIPRGTML. The chain crosses the membrane as a helical span at residues 414-434; it reads AIFITTVAYIGVAICVAACVV. Residues 435-546 lie on the Extracellular side of the membrane; sequence RDATGSMNDT…NNEPLRGYFL (112 aa). N-linked (GlcNAc...) asparagine glycosylation is found at Asn442 and Asn452. The next 2 helical transmembrane spans lie at 547–567 and 568–588; these read TFVI…APII and SNFF…ASYA. Residues 589–605 lie on the Extracellular side of the membrane; that stretch reads KSPGWRPAYGIYNMWVS. The chain crosses the membrane as a helical span at residues 606 to 626; that stretch reads LFGAILCCAVMFVINWWAAVI. Over 627 to 1095 the chain is Cytoplasmic; it reads TYVIELFLYI…NHKNVLTFYS (469 aa).

It belongs to the SLC12A transporter family. As to quaternary structure, when phosphorylated, interacts with PPP3CB. In terms of processing, phosphorylated at Ser-87, Thr-96 and Thr-101 by OXSR1/OSR1 and STK39/SPAK downstream of WNK kinases (WNK1, WNK2, WNK3 or WNK4), promoting its activity. Short-term cyclosporine administration increases SLC12A1 phosphorylation in kidney thick ascending limb, possibly through the inhibition of PPP3CB/calcineurin A beta phosphatase. Predominantly expressed in kidney (at protein level). In terms of tissue distribution, kidney-specific; most highly expressed in the outer stripe of outer medulla (at protein level). As to expression, kidney-specific; most highly expressed in the cortical thick ascending limb (at protein level). Kidney-specific; most highly expressed in the inner stripe of outer medulla (at protein level).

Its subcellular location is the apical cell membrane. It catalyses the reaction K(+)(out) + 2 chloride(out) + Na(+)(out) = K(+)(in) + 2 chloride(in) + Na(+)(in). Activated following phosphorylation by OXSR1/OSR1 and STK39/SPAK downstream of WNK kinases (WNK1, WNK2, WNK3 or WNK4). With respect to regulation, inhibited by mercury dichloride and diuretic drug bumetaide. Inactive in isotonic conditions. Its function is as follows. Renal sodium, potassium and chloride ion cotransporter that mediates the transepithelial NaCl reabsorption in the thick ascending limb and plays an essential role in the urinary concentration and volume regulation. Electrically silent transporter system. High affinity, high capacity cotransporter for sodium, potassium and chloride ions, with a coupling ratio 1Na(+):1K(+):2Cl(-). In terms of biological role, high affinity, low capacity cotransporter for sodium, potassium and chloride ions, with a coupling ratio 1Na(+):1K(+):2Cl(-). Functionally, low affinity, low capacity cotransporter for sodium, potassium and chloride ions, with a coupling ratio 1Na(+):1K(+):2Cl(-). This chain is Solute carrier family 12 member 1 (Slc12a1), found in Mus musculus (Mouse).